The primary structure comprises 993 residues: Vacuolar membrane protease (993 aa).

Residues 1 to 24 are Cytoplasmic-facing; sequence MSPAMANPRVRKFNPIAFTPLPVT. The helical transmembrane segment at 25–45 threads the bilayer; that stretch reads LITTIVYLAVLILVLVTYLVV. Over 46-391 the chain is Vacuolar; sequence PPAPTLEMSP…SAFAVFRLHT (346 aa). Residues Asn-59, Asn-116, and Asn-119 are each glycosylated (N-linked (GlcNAc...) asparagine). Residues His-175 and Asp-187 each coordinate Zn(2+). Glu-221 functions as the Proton acceptor in the catalytic mechanism. Zn(2+) is bound at residue Glu-222. N-linked (GlcNAc...) asparagine glycosylation occurs at Asn-238. Zn(2+) is bound by residues Glu-247 and His-320. A helical membrane pass occupies residues 392–412; that stretch reads LFALSVTLLVSAPLVLFITSI. Topologically, residues 413-447 are cytoplasmic; the sequence is ALSKTDRMYLFSMSKSLGGTSETVSLRGLRGLFRT. A helical membrane pass occupies residues 448 to 468; that stretch reads PIILTVTTVITIGLAYLLEKI. The Vacuolar segment spans residues 469–475; that stretch reads NPYIVHS. A helical membrane pass occupies residues 476–496; the sequence is SQFAVWSMMLSVWIFVAWFLA. Residues 497 to 509 lie on the Cytoplasmic side of the membrane; that stretch reads RVADFFRPSALHR. The chain crosses the membrane as a helical span at residues 510-530; sequence AYSYTWIFIATWIMLVISTVY. The Vacuolar segment spans residues 531 to 534; it reads ANQK. Residues 535–555 form a helical membrane-spanning segment; it reads GIAAGYFIFFYFAAVFLATWV. At 556-672 the chain is on the cytoplasmic side; it reads SYLELFSLPR…WSWTLPRWTW (117 aa). Residues 579 to 621 form a disordered region; sequence RRSSSLSSRLLTPSADELPSDIGPNGAENLGDPDETDPTESTS. Residues 673-693 form a helical membrane-spanning segment; it reads ILQLLLLAPIVIILVGQVGLL. Topologically, residues 694–709 are vacuolar; it reads LTTAMSQIGSDGVSTF. A helical transmembrane segment spans residues 710–730; it reads IVYLACALLSTLLFAPLFPFI. Topologically, residues 731–737 are cytoplasmic; it reads HRFTYHV. The helical transmembrane segment at 738 to 758 threads the bilayer; that stretch reads PTFLLLIFIGTLIYNLVAFPF. The Vacuolar portion of the chain corresponds to 759-993; that stretch reads SPANRLKIFF…VEASHDFIIQ (235 aa). 3 N-linked (GlcNAc...) asparagine glycosylation sites follow: Asn-806, Asn-847, and Asn-955.

It belongs to the peptidase M28 family. It depends on Zn(2+) as a cofactor.

It is found in the vacuole membrane. Functionally, may be involved in vacuolar sorting and osmoregulation. This chain is Vacuolar membrane protease, found in Paracoccidioides lutzii (strain ATCC MYA-826 / Pb01) (Paracoccidioides brasiliensis).